The following is an 886-amino-acid chain: Pyruvate dehydrogenase E1 component (886 aa).

In terms of assembly, homodimer. Part of the PDH complex, consisting of multiple copies of pyruvate dehydrogenase (E1), dihydrolipoamide acetyltransferase (E2) and lipoamide dehydrogenase (E3). Requires thiamine diphosphate as cofactor.

The enzyme catalyses N(6)-[(R)-lipoyl]-L-lysyl-[protein] + pyruvate + H(+) = N(6)-[(R)-S(8)-acetyldihydrolipoyl]-L-lysyl-[protein] + CO2. Its function is as follows. Component of the pyruvate dehydrogenase (PDH) complex, that catalyzes the overall conversion of pyruvate to acetyl-CoA and CO(2). The chain is Pyruvate dehydrogenase E1 component (aceE) from Haemophilus influenzae (strain ATCC 51907 / DSM 11121 / KW20 / Rd).